We begin with the raw amino-acid sequence, 799 residues long: Phosphate transporter PHO1-1 (799 aa).

Residues 1 to 406 lie on the Cytoplasmic side of the membrane; that stretch reads MVKFSKQFEG…TQRKESHTVT (406 aa). The SPX domain maps to 2-354; it reads VKFSKQFEGQ…GKQVLSVYLR (353 aa). The interval 170 to 243 is disordered; sequence SLSGHHRAAA…GSLSRQSLGR (74 aa). Residues 180 to 193 are compositionally biased toward low complexity; it reads GDDPSISSSSATSG. Over residues 210–222 the composition is skewed to basic and acidic residues; sequence ESQHETAVMRDPE. The span at 234-243 shows a compositional bias: polar residues; that stretch reads GSLSRQSLGR. The helical transmembrane segment at 407–427 threads the bilayer; sequence FFIGLMTGCFVALFLGYCIMA. Over 428-447 the chain is Extracellular; the sequence is HIAGMYTQRRDSIYMETVYP. A helical transmembrane segment spans residues 448–468; that stretch reads VFSMFSLMFLHLFMYGCNMVA. Topologically, residues 469–492 are cytoplasmic; sequence WRKARINYSFIFEFAAGRELKYRD. Residues 493 to 513 traverse the membrane as a helical segment; the sequence is VFLVCTASMAVIVGVMFAHLS. Over 514 to 522 the chain is Extracellular; it reads LAVRGFHAQ. The helical transmembrane segment at 523–543 threads the bilayer; that stretch reads AIPGFLLLGFLLLLFCPFNMV. Residues 544–672 lie on the Cytoplasmic side of the membrane; that stretch reads YRSTRFQFLR…AYEKDRSLGS (129 aa). Residues 608–799 form the EXS domain; sequence INTKHIRDLA…LPFHEADEED (192 aa). Residues 673–693 form a helical membrane-spanning segment; that stretch reads LSLLVIVSSSATMYQLYWDFV. Residues 694–718 lie on the Extracellular side of the membrane; the sequence is KDWGLLQPNSKNPWLRNDLILKSKS. The helical transmembrane segment at 719–739 threads the bilayer; it reads IYYLSMGLNLVLRLAWLQTVI. Residues 740 to 799 are Cytoplasmic-facing; that stretch reads HPNFGSLDSRVTSFFLAALEVIRRGHWNFYRLENEHLNNAGKFRAVKTVPLPFHEADEED.

The protein belongs to the SYG1 (TC 2.A.94) family. Expressed in roots and flowers.

Its subcellular location is the cell membrane. May transport inorganic phosphate (Pi). The sequence is that of Phosphate transporter PHO1-1 (PHO1-1) from Oryza sativa subsp. japonica (Rice).